The sequence spans 250 residues: 2-(R)-hydroxypropyl-CoM dehydrogenase (250 aa).

Residues 12-14, D33, 60-61, and N87 each bind NAD(+); these read SGN and DV. Residue R152 participates in 2-oxopropyl-coenzyme M binding. Y155 serves as the catalytic Proton acceptor. 188–192 contributes to the NAD(+) binding site; sequence IETPM. 195 to 196 lines the 2-oxopropyl-coenzyme M pocket; sequence WR.

This sequence belongs to the short-chain dehydrogenases/reductases (SDR) family. As to quaternary structure, homodimer in solution. Homotetramer. Component III of the aliphatic epoxide carboxylation complex together with components I, II and IV.

The enzyme catalyses (R)-2-hydroxypropyl-coenzyme M + NAD(+) = 2-oxopropyl-coenzyme M + NADH + H(+). The protein operates within alkene metabolism; propylene degradation. Its activity is regulated as follows. Inhibited by the arginine-specific modifiers 2,3-butanedione and phenylglyoxal. 2-(2-methyl-2-hydroxypropylthio)ethanesulfonate (M-HPC), an achiral analog of both R-HPC and S-HPC, and (2S)-2-hydroxypropyl-coenzyme M (S-HPC) are competitive inhibitors. Inhibited (at 70%) by the coenzyme M analog 2-bromoethanesulfonate (BES). Functionally, involved in aliphatic epoxide carboxylation. Catalyzes the reversible oxidation of (R)-2-hydroxypropyl-coenzyme M (R-HPC) to 2-oxopropyl-coenzyme M (2-KPC). The enzyme is highly specific for the R enantiomers. In vitro can also use achiral 2-propanol and short-chain (R)- and (S)-2-alkanols. This Xanthobacter autotrophicus (strain ATCC BAA-1158 / Py2) protein is 2-(R)-hydroxypropyl-CoM dehydrogenase.